We begin with the raw amino-acid sequence, 316 residues long: ATP synthase gamma chain (316 aa).

It belongs to the ATPase gamma chain family. As to quaternary structure, F-type ATPases have 2 components, CF(1) - the catalytic core - and CF(0) - the membrane proton channel. CF(1) has five subunits: alpha(3), beta(3), gamma(1), delta(1), epsilon(1). CF(0) has three main subunits: a, b and c.

Its subcellular location is the cellular thylakoid membrane. In terms of biological role, produces ATP from ADP in the presence of a proton gradient across the membrane. The gamma chain is believed to be important in regulating ATPase activity and the flow of protons through the CF(0) complex. This chain is ATP synthase gamma chain, found in Prochlorococcus marinus (strain MIT 9313).